The sequence spans 255 residues: Large ribosomal subunit protein uL4 (255 aa).

This sequence belongs to the universal ribosomal protein uL4 family. In terms of assembly, part of the 50S ribosomal subunit.

Its function is as follows. One of the primary rRNA binding proteins, this protein initially binds near the 5'-end of the 23S rRNA. It is important during the early stages of 50S assembly. It makes multiple contacts with different domains of the 23S rRNA in the assembled 50S subunit and ribosome. In terms of biological role, forms part of the polypeptide exit tunnel. This is Large ribosomal subunit protein uL4 from Thermoplasma volcanium (strain ATCC 51530 / DSM 4299 / JCM 9571 / NBRC 15438 / GSS1).